Here is a 619-residue protein sequence, read N- to C-terminus: Mitochondrial Rho GTPase 1 (619 aa).

The Cytoplasmic segment spans residues 1-593; it reads MKKDVRILLV…TQADLKSSTF (593 aa). Positions 2 to 168 constitute a Miro 1 domain; that stretch reads KKDVRILLVG…FYYAQKAVLH (167 aa). 5 residues coordinate GTP: Arg-14, Gly-16, Lys-17, Thr-18, and Ser-19. Thr-18 contacts Mg(2+). Mg(2+) is bound by residues Pro-35 and Asp-57. GTP is bound by residues Ser-59, Asn-118, Lys-119, Asp-121, Ala-149, and Lys-150. 2 EF-hand domains span residues 184–219 and 304–339; these read ACIK…CFNT and HAYL…FPYM. Positions 197, 199, 201, 203, 208, 317, 319, 321, 323, and 328 each coordinate Ca(2+). The Miro 2 domain occupies 417-580; the sequence is RNVFRCNVVG…FVKLTTMAMY (164 aa). The GTP site is built by Gly-429, Cys-430, Gly-431, Lys-432, Ser-433, Gly-434, Arg-448, Lys-529, Asp-531, Thr-559, and Cys-560. Gly-429 is a binding site for Mg(2+). Residues 594–616 traverse the membrane as a helical; Anchor for type IV membrane protein segment; the sequence is WLRASFGATVFAFLGFAMYKALI. Over 617-619 the chain is Mitochondrial intermembrane; the sequence is KQR.

It belongs to the mitochondrial Rho GTPase family. In terms of assembly, homodimer.

The protein localises to the mitochondrion outer membrane. The enzyme catalyses GTP + H2O = GDP + phosphate + H(+). It carries out the reaction ATP + H2O = ADP + phosphate + H(+). The catalysed reaction is UTP + H2O = UDP + phosphate + H(+). In terms of biological role, atypical mitochondrial nucleoside-triphosphatase (NTPase) involved in mitochondrial trafficking. Probably involved in control of anterograde transport of mitochondria and their subcellular distribution. Can hydrolyze GTP, ATP and UTP. This chain is Mitochondrial Rho GTPase 1 (RHOT1), found in Gallus gallus (Chicken).